The primary structure comprises 232 residues: Phosphatidylserine decarboxylase proenzyme (232 aa).

The active-site Schiff-base intermediate with substrate; via pyruvic acid is the Ser-190. A Pyruvic acid (Ser); by autocatalysis modification is found at Ser-190.

It belongs to the phosphatidylserine decarboxylase family. PSD-A subfamily. As to quaternary structure, heterodimer of a large membrane-associated beta subunit and a small pyruvoyl-containing alpha subunit. It depends on pyruvate as a cofactor. Is synthesized initially as an inactive proenzyme. Formation of the active enzyme involves a self-maturation process in which the active site pyruvoyl group is generated from an internal serine residue via an autocatalytic post-translational modification. Two non-identical subunits are generated from the proenzyme in this reaction, and the pyruvate is formed at the N-terminus of the alpha chain, which is derived from the carboxyl end of the proenzyme. The post-translation cleavage follows an unusual pathway, termed non-hydrolytic serinolysis, in which the side chain hydroxyl group of the serine supplies its oxygen atom to form the C-terminus of the beta chain, while the remainder of the serine residue undergoes an oxidative deamination to produce ammonia and the pyruvoyl prosthetic group on the alpha chain.

It is found in the cell membrane. The enzyme catalyses a 1,2-diacyl-sn-glycero-3-phospho-L-serine + H(+) = a 1,2-diacyl-sn-glycero-3-phosphoethanolamine + CO2. It functions in the pathway phospholipid metabolism; phosphatidylethanolamine biosynthesis; phosphatidylethanolamine from CDP-diacylglycerol: step 2/2. Catalyzes the formation of phosphatidylethanolamine (PtdEtn) from phosphatidylserine (PtdSer). This is Phosphatidylserine decarboxylase proenzyme from Rhodopseudomonas palustris (strain ATCC BAA-98 / CGA009).